The following is a 165-amino-acid chain: Endolysin (165 aa).

Residue Glu-21 is part of the active site.

This sequence belongs to the glycosyl hydrolase 24 family. In terms of assembly, monomer.

The protein resides in the host cytoplasm. It catalyses the reaction Endolytic cleavage of the (1-&gt;4)-beta-glycosidic linkage between N-acetylmuramic acid (MurNAc) and N-acetylglucosamine (GlcNAc) residues in peptidoglycan with concomitant formation of a 1,6-anhydrobond in the MurNAc residue.. Endolysin with transglycosylase activity that degrades host peptidoglycans and participates with the holin and spanin proteins in the sequential events which lead to the programmed host cell lysis releasing the mature viral particles. Once the holin has permeabilized the host cell membrane, the endolysin can reach the periplasm and break down the peptidoglycan layer. The sequence is that of Endolysin (K) from Enterobacteriaceae (Bacteriophage P2).